Reading from the N-terminus, the 413-residue chain is Cell division protein FtsA (413 aa).

Belongs to the FtsA/MreB family. Self-interacts. Interacts with FtsZ.

The protein resides in the cell inner membrane. Functionally, cell division protein that is involved in the assembly of the Z ring. May serve as a membrane anchor for the Z ring. The sequence is that of Cell division protein FtsA from Borreliella burgdorferi (strain ATCC 35210 / DSM 4680 / CIP 102532 / B31) (Borrelia burgdorferi).